Consider the following 361-residue polypeptide: 3-dehydroquinate synthase (361 aa).

NAD(+) contacts are provided by residues Gly106–Asp110, Thr130–Thr131, Lys143, and Lys152. Zn(2+) contacts are provided by Glu185, His247, and His264.

The protein belongs to the sugar phosphate cyclases superfamily. Dehydroquinate synthase family. Requires NAD(+) as cofactor. The cofactor is Co(2+). Zn(2+) serves as cofactor.

The protein localises to the cytoplasm. It carries out the reaction 7-phospho-2-dehydro-3-deoxy-D-arabino-heptonate = 3-dehydroquinate + phosphate. The protein operates within metabolic intermediate biosynthesis; chorismate biosynthesis; chorismate from D-erythrose 4-phosphate and phosphoenolpyruvate: step 2/7. Its function is as follows. Catalyzes the conversion of 3-deoxy-D-arabino-heptulosonate 7-phosphate (DAHP) to dehydroquinate (DHQ). This chain is 3-dehydroquinate synthase, found in Gloeobacter violaceus (strain ATCC 29082 / PCC 7421).